The primary structure comprises 231 residues: MHIMEGFLPLQWCLFWFAVSAPFIAYGIYQLNRLVKENRSTLPLLAVCGAFIFVLSSLKMPSVTGSCSHPTGTGLGAIMFGPFITSVLSIIVLVYQALFLAHGGLTTLGANVFSMGICGPLLGYWVYQGGKAINLNSIVNVFLASALADIFTYVITSIQLSLAFPAAAGGYMTSFITFAGIFAVTQVPLAIIEGIFLTLTFKYINQIRPDILIHLGVISPAQSKQILEAYS.

6 helical membrane passes run 8-28 (LPLQ…AYGI), 41-61 (TLPL…LKMP), 74-94 (GLGA…IVLV), 97-117 (ALFL…SMGI), 138-158 (IVNV…ITSI), and 175-195 (FITF…IEGI).

This sequence belongs to the CbiM family. In terms of assembly, forms an energy-coupling factor (ECF) transporter complex composed of an ATP-binding protein (A component, CbiO), a transmembrane protein (T component, CbiQ) and 2 possible substrate-capture proteins (S components, CbiM and CbiN) of unknown stoichimetry.

The protein localises to the cell membrane. Its pathway is cofactor biosynthesis; adenosylcobalamin biosynthesis. Part of the energy-coupling factor (ECF) transporter complex CbiMNOQ involved in cobalt import. The chain is Putative cobalt transport protein CbiM 1 from Methanosphaerula palustris (strain ATCC BAA-1556 / DSM 19958 / E1-9c).